A 20-amino-acid polypeptide reads, in one-letter code: Apidaecin 2+ (20 aa).

Pro residues predominate over residues 1-13 (GKPNKPRPAPIKP). Positions 1 to 20 (GKPNKPRPAPIKPRPPHPRL) are disordered.

The protein localises to the secreted. In terms of biological role, antimicrobial peptide active against many Gram-negative enterobacterial and plant-associated bacterial species. Not active against other bacterial species like H.pylori, P.mirabilis, B.pertussis or N.gonorrhoeae. The protein is Apidaecin 2+ of Pimpla disparis (Parasitic wasp).